A 140-amino-acid polypeptide reads, in one-letter code: 3-hydroxyacyl-[acyl-carrier-protein] dehydratase FabZ (140 aa).

His47 is a catalytic residue.

It belongs to the thioester dehydratase family. FabZ subfamily.

It is found in the cytoplasm. The enzyme catalyses a (3R)-hydroxyacyl-[ACP] = a (2E)-enoyl-[ACP] + H2O. Its function is as follows. Involved in unsaturated fatty acids biosynthesis. Catalyzes the dehydration of short chain beta-hydroxyacyl-ACPs and long chain saturated and unsaturated beta-hydroxyacyl-ACPs. The protein is 3-hydroxyacyl-[acyl-carrier-protein] dehydratase FabZ of Streptococcus equi subsp. equi (strain 4047).